The primary structure comprises 459 residues: Fe(3+)-Zn(2+) purple acid phosphatase (459 aa).

A signal peptide spans 1–22 (MGVVKGLLALALVLNVVVVSNG). Blocked amino end (Gly) is present on Gly-23. Asn-108 carries N-linked (GlcNAc...) asparagine; partial glycosylation. Asn-136 carries an N-linked (GlcNAc...) asparagine glycan. Fe cation is bound at residue Asp-162. Residue Asn-170 is glycosylated (N-linked (GlcNAc...) asparagine). Asp-191 and Tyr-194 together coordinate Fe cation. Asp-191 provides a ligand contact to Zn(2+). Asn-228 serves as a coordination point for Zn(2+). Asn-238 carries N-linked (GlcNAc...) asparagine glycosylation. A Zn(2+)-binding site is contributed by His-313. The active-site Proton donor is the His-323. Residue His-350 participates in Zn(2+) binding. Residue His-352 participates in Fe cation binding. Asn-423 is a glycosylation site (N-linked (GlcNAc...) asparagine).

Belongs to the metallophosphoesterase superfamily. Purple acid phosphatase family. In terms of assembly, homodimer; disulfide-linked. The cofactor is Fe cation. It depends on Zn(2+) as a cofactor.

It is found in the secreted. It carries out the reaction a phosphate monoester + H2O = an alcohol + phosphate. With respect to regulation, inhibited by compounds CC24201, CC27209, and MO07123. Inhibited by the tetraoxoanions molybdate and phosphate. Not inhibited by EDTA or tartrate. The polypeptide is Fe(3+)-Zn(2+) purple acid phosphatase (Phaseolus vulgaris (Kidney bean)).